The chain runs to 724 residues: Hyperosmolality-gated Ca2+ permeable channel 3.1 (724 aa).

Residues 1-4 (MEFG) are Extracellular-facing. A helical transmembrane segment spans residues 5–25 (SFLVSLGTSFVIFVILMLLFT). Topologically, residues 26–85 (WLSRKSGNAPIYYPNRILKGLEPWEGTSLTRNPFAWMREALTSSEQDVVNLSGVDTAVHF) are cytoplasmic. Residues 86–108 (VFLSTVLGIFACSSLLLLPTLLP) form a helical membrane-spanning segment. Topologically, residues 109 to 147 (LAATDNNIKNTKNATDTTSKGTFSQLDNLSMANITKKSS) are extracellular. Residues 148-170 (RLWAFLGAVYWISLVTYFFLWKA) form a helical membrane-spanning segment. Residues 171 to 358 (YKHVSSLRAQ…WQNLNIKLFS (188 aa)) are Cytoplasmic-facing. Residues 241-309 (EKLEGYKKKL…KAVLAEKQQT (69 aa)) adopt a coiled-coil conformation. A helical membrane pass occupies residues 359 to 385 (RIIRQYFIYFFVAVTILFYMIPIAFVS). Topologically, residues 386–411 (AITTLKNLQRIIPFIKPVVEITAIRT) are extracellular. The helical transmembrane segment at 412–439 (VLESFLPQIALIVFLAMLPKLLLFLSKA) threads the bilayer. Residues 440–448 (EGIPSQSHA) lie on the Cytoplasmic side of the membrane. A helical transmembrane segment spans residues 449–472 (IRAASGKYFYFSVFNVFIGVTLAG). Over 473–497 (TLFNTVKDIAKNPKLDMIINLLATS) the chain is Extracellular. Residues 498 to 529 (LPKSATFFLTYVALKFFIGYGLELSRIIPLII) traverse the membrane as a helical segment. The Cytoplasmic segment spans residues 530–554 (FHLKKKYLCKTEAEVKEAWYPGDLS). The helical transmembrane segment at 555-574 (YATRVPGDMLILTITFCYSV) threads the bilayer. Ile575 is a topological domain (extracellular). The chain crosses the membrane as a helical span at residues 576–594 (APLILIFGITYFGLGWLVL). Residues 595–612 (RNQALKVYVPSYESYGRM) lie on the Cytoplasmic side of the membrane. A helical membrane pass occupies residues 613–636 (WPHIHQRILAALFLFQVVMFGYLG). Residues 637–641 (AKTFF) lie on the Extracellular side of the membrane. A helical membrane pass occupies residues 642–662 (YTALVIPLIITSLIFGYVCRQ). The Cytoplasmic portion of the chain corresponds to 663-724 (KFYGGFEHTA…YQDFNAIAGV (62 aa)).

Belongs to the CSC1 (TC 1.A.17) family. Homodimer.

Its subcellular location is the membrane. Acts as a hyperosmolarity-gated non-selective cation channel that permeates Ca(2+) ions. Mechanosensitive ion channel that converts mechanical stimuli into a flow of ions: activated in response to membrane stretch. Not activated in response to membrane poke. The polypeptide is Hyperosmolality-gated Ca2+ permeable channel 3.1 (Arabidopsis thaliana (Mouse-ear cress)).